The primary structure comprises 300 residues: Protein p34 (300 aa).

5 consecutive transmembrane segments (helical) span residues 14–34, 39–59, 87–107, 119–139, and 170–190; these read YLSV…WVVT, ILAS…NLVA, SIFF…SLFI, IIMY…TYVI, and LSDY…LYIF.

The protein belongs to the cation diffusion facilitator (CDF) transporter (TC 2.A.4) family.

The protein resides in the cell membrane. In Rickettsia prowazekii (strain Madrid E), this protein is Protein p34 (p34).